We begin with the raw amino-acid sequence, 371 residues long: Phospholipid-transporting ATPase accessory subunit ivn1 (371 aa).

Residues 1–39 lie on the Cytoplasmic side of the membrane; it reads MSQTEIVKKPKHKRFKRPDKSRFVQQTLPAWQFIFTPWT. A helical transmembrane segment spans residues 40-60; it reads VLPLLFLLGIVFAPLGAGMFV. Residues 61-325 lie on the Extracellular side of the membrane; it reads ASRRVKELRI…STTSVIGGKN (265 aa). 2 cysteine pairs are disulfide-bonded: cysteine 75–cysteine 111 and cysteine 166–cysteine 181. Asparagine 99 is a glycosylation site (N-linked (GlcNAc...) asparagine). N-linked (GlcNAc...) asparagine glycosylation is found at asparagine 190, asparagine 212, asparagine 216, asparagine 233, asparagine 284, and asparagine 297. Residues 326-346 form a helical membrane-spanning segment; that stretch reads YFLGILYFVIGGLCAASGVIL. At 347–371 the chain is on the cytoplasmic side; sequence SIACLIKPRRVGDPRYLSWNRGKSS.

Belongs to the CDC50/LEM3 family.

The protein localises to the endoplasmic reticulum membrane. Functionally, accessory component of a P4-ATPase flippase complex which catalyzes the hydrolysis of ATP coupled to the transport of aminophospholipids from the lumenal to the cytosolic leaflet of membranes and ensures the maintenance of asymmetric distribution of phospholipids. The chain is Phospholipid-transporting ATPase accessory subunit ivn1 (ivn1) from Schizosaccharomyces pombe (strain 972 / ATCC 24843) (Fission yeast).